Here is a 351-residue protein sequence, read N- to C-terminus: uncharacterized protein (351 aa).

Residues 1 to 61 (MNDKRKPSFQ…RDKQEVKETR (61 aa)) form a disordered region. Composition is skewed to basic and acidic residues over residues 16 to 38 (FQERSVGEKYREKPTQNRPHFND) and 44 to 61 (RNEKSRFPRDKQEVKETR).

It belongs to the class IV-like SAM-binding methyltransferase superfamily. RNA methyltransferase TrmH family.

This is an uncharacterized protein from Haemophilus influenzae (strain ATCC 51907 / DSM 11121 / KW20 / Rd).